We begin with the raw amino-acid sequence, 172 residues long: Large ribosomal subunit protein uL10 (172 aa).

It belongs to the universal ribosomal protein uL10 family. As to quaternary structure, part of the ribosomal stalk of the 50S ribosomal subunit. The N-terminus interacts with L11 and the large rRNA to form the base of the stalk. The C-terminus forms an elongated spine to which L12 dimers bind in a sequential fashion forming a multimeric L10(L12)X complex.

Functionally, forms part of the ribosomal stalk, playing a central role in the interaction of the ribosome with GTP-bound translation factors. The protein is Large ribosomal subunit protein uL10 of Bartonella bacilliformis (strain ATCC 35685 / KC583 / Herrer 020/F12,63).